The following is a 558-amino-acid chain: Acylase ACY 1 proenzyme (558 aa).

Catalysis depends on threonine 368, which acts as the Nucleophile.

Belongs to the gamma-glutamyltransferase family. As to quaternary structure, dimer of two non-identical chains processed from the same precursor.

The enzyme catalyses (7R)-7-(4-carboxybutanamido)cephalosporanate + H2O = (7R)-7-aminocephalosporanate + glutarate. The catalysed reaction is an N-terminal (5-L-glutamyl)-[peptide] + an alpha-amino acid = 5-L-glutamyl amino acid + an N-terminal L-alpha-aminoacyl-[peptide]. It catalyses the reaction glutathione + H2O = L-cysteinylglycine + L-glutamate. It carries out the reaction an S-substituted glutathione + H2O = an S-substituted L-cysteinylglycine + L-glutamate. Its function is as follows. Besides the cephalosporin acylase I activity which converts GL-7ACA into 7-ACA; this enzyme displays some gamma glutamyltranspeptidase activity. In Pseudomonas sp. (strain SE83), this protein is Acylase ACY 1 proenzyme (acyI).